The following is a 393-amino-acid chain: Elongation factor Tu (393 aa).

The 194-residue stretch at 10-203 (KPHVNIGTIG…AVDNYIPTPV (194 aa)) folds into the tr-type G domain. The G1 stretch occupies residues 19–26 (GHVDHGKT). A GTP-binding site is contributed by 19–26 (GHVDHGKT). Threonine 26 is a binding site for Mg(2+). Residues 60–64 (GITIS) are G2. The tract at residues 81–84 (DCPG) is G3. GTP contacts are provided by residues 81 to 85 (DCPGH) and 136 to 139 (NKVD). The tract at residues 136-139 (NKVD) is G4. The G5 stretch occupies residues 173 to 175 (SAL).

Belongs to the TRAFAC class translation factor GTPase superfamily. Classic translation factor GTPase family. EF-Tu/EF-1A subfamily. Monomer.

It is found in the cytoplasm. It carries out the reaction GTP + H2O = GDP + phosphate + H(+). Its function is as follows. GTP hydrolase that promotes the GTP-dependent binding of aminoacyl-tRNA to the A-site of ribosomes during protein biosynthesis. The protein is Elongation factor Tu of Chloroherpeton thalassium (strain ATCC 35110 / GB-78).